The following is a 623-amino-acid chain: UvrABC system protein C (623 aa).

The region spanning 28 to 105 (GAPGVYRMLD…IKQLKPKYNV (78 aa)) is the GIY-YIG domain. The UVR domain occupies 215–250 (TRVQEELAEQMMAASEAMEFERAAALRDRIRALTTV).

This sequence belongs to the UvrC family. As to quaternary structure, interacts with UvrB in an incision complex.

It is found in the cytoplasm. Functionally, the UvrABC repair system catalyzes the recognition and processing of DNA lesions. UvrC both incises the 5' and 3' sides of the lesion. The N-terminal half is responsible for the 3' incision and the C-terminal half is responsible for the 5' incision. The polypeptide is UvrABC system protein C (Ruegeria pomeroyi (strain ATCC 700808 / DSM 15171 / DSS-3) (Silicibacter pomeroyi)).